Reading from the N-terminus, the 200-residue chain is Protein GrpE (200 aa).

Composition is skewed to acidic residues over residues 1–17 (MNEQ…EQFD) and 34–44 (AFAEAGEETRD). The tract at residues 1–49 (MNEQPNEELQSEDEQFDPQETVSFEGETAANDEAFAEAGEETRDEEMTR) is disordered.

The protein belongs to the GrpE family. Homodimer.

Its subcellular location is the cytoplasm. Functionally, participates actively in the response to hyperosmotic and heat shock by preventing the aggregation of stress-denatured proteins, in association with DnaK and GrpE. It is the nucleotide exchange factor for DnaK and may function as a thermosensor. Unfolded proteins bind initially to DnaJ; upon interaction with the DnaJ-bound protein, DnaK hydrolyzes its bound ATP, resulting in the formation of a stable complex. GrpE releases ADP from DnaK; ATP binding to DnaK triggers the release of the substrate protein, thus completing the reaction cycle. Several rounds of ATP-dependent interactions between DnaJ, DnaK and GrpE are required for fully efficient folding. The protein is Protein GrpE of Rhodopirellula baltica (strain DSM 10527 / NCIMB 13988 / SH1).